The chain runs to 406 residues: Vacuole membrane protein 1 (406 aa).

A disordered region spans residues 1-22; that stretch reads MAENGTDCEQRRVGMPKEQNNG. At 1-42 the chain is on the cytoplasmic side; sequence MAENGTDCEQRRVGMPKEQNNGSFQDPSFMCNRKRRDREERQ. The chain crosses the membrane as a helical span at residues 43–63; that stretch reads SIVLWRKPLITLQYFILEVLI. Topologically, residues 64 to 76 are extracellular; it reads NLKEWSVRLWHRR. Residues 77–97 form a helical membrane-spanning segment; sequence MMVVSVLLLLAVLSVAYYIEG. Residues 98 to 110 lie on the Cytoplasmic side of the membrane; it reads EHQQCVQYIEKKC. A helical membrane pass occupies residues 111–131; sequence LWCAYWVGLGILSSVGLGTGL. Over 132-250 the chain is Extracellular; the sequence is HTFLLYLGPH…ATRAKLTVQN (119 aa). Residues 173 to 316 form a VTT domain region; the sequence is GTEGAISLWT…FVIITFSKHI (144 aa). Residues 251–271 form a helical membrane-spanning segment; sequence LVQKVGFLGILACASIPNPLF. Residues 272–273 are Cytoplasmic-facing; that stretch reads DL. The helical transmembrane segment at 274–294 threads the bilayer; it reads AGITCGHFLVPFWTFFGATLI. Residues 295–306 are Extracellular-facing; the sequence is GKAIIKMHIQKL. The helical transmembrane segment at 307–327 threads the bilayer; the sequence is FVIITFSKHIVEQMVSLIGVI. Over 328 to 363 the chain is Cytoplasmic; that stretch reads PSIGPSLQKPFQEYLEAQRKKLHHKGDSGTPQSENW. Residues 364-384 traverse the membrane as a helical segment; it reads LSWAFEKLVIIMVFYFILSII. The Extracellular segment spans residues 385–406; sequence NSMAQSYAKRVQQKKLSVEKTK.

This sequence belongs to the VMP1 family.

The protein resides in the endoplasmic reticulum-Golgi intermediate compartment membrane. The protein localises to the cell membrane. It is found in the vacuole membrane. Its subcellular location is the endoplasmic reticulum membrane. It catalyses the reaction a 1,2-diacyl-sn-glycero-3-phospho-L-serine(in) = a 1,2-diacyl-sn-glycero-3-phospho-L-serine(out). The catalysed reaction is cholesterol(in) = cholesterol(out). The enzyme catalyses a 1,2-diacyl-sn-glycero-3-phosphocholine(in) = a 1,2-diacyl-sn-glycero-3-phosphocholine(out). It carries out the reaction a 1,2-diacyl-sn-glycero-3-phosphoethanolamine(in) = a 1,2-diacyl-sn-glycero-3-phosphoethanolamine(out). Phospholipid scramblase involved in lipid homeostasis and membrane dynamics processes. Has phospholipid scramblase activity toward cholesterol and phosphatidylserine, as well as phosphatidylethanolamine and phosphatidylcholine. Required for autophagosome formation: participates in early stages of autophagosome biogenesis at the endoplasmic reticulum (ER) membrane by reequilibrating the leaflets of the ER as lipids are extracted by atg2 (atg2a or atg2b) to mediate autophagosome assembly. In addition to autophagy, involved in other processes in which phospholipid scramblase activity is required. Modulates ER contacts with lipid droplets, mitochondria and endosomes. In Xenopus laevis (African clawed frog), this protein is Vacuole membrane protein 1.